The sequence spans 172 residues: Translationally-controlled tumor protein homolog (172 aa).

Positions 1-172 constitute a TCTP domain; sequence MIIYRDCISQ…FKDGLEIEKC (172 aa). Position 46 is a phosphoserine; by PLK1 (S46).

This sequence belongs to the TCTP family.

Its subcellular location is the cytoplasm. Functionally, involved in calcium binding and microtubule stabilization. The sequence is that of Translationally-controlled tumor protein homolog (TPT1) from Gallus gallus (Chicken).